The following is a 395-amino-acid chain: Glutamate N-acetyltransferase (395 aa).

Residues T146, K169, T180, E263, N390, and T395 each coordinate substrate. T180 functions as the Nucleophile in the catalytic mechanism.

This sequence belongs to the ArgJ family. As to quaternary structure, heterotetramer of two alpha and two beta chains.

It is found in the cytoplasm. The enzyme catalyses N(2)-acetyl-L-ornithine + L-glutamate = N-acetyl-L-glutamate + L-ornithine. The protein operates within amino-acid biosynthesis; L-arginine biosynthesis; L-ornithine and N-acetyl-L-glutamate from L-glutamate and N(2)-acetyl-L-ornithine (cyclic): step 1/1. Catalyzes the transfer of the acetyl group from N(2)-acetylornithine to glutamate, forming N-acetylglutamate and L-ornithine. The sequence is that of Glutamate N-acetyltransferase from Methanosarcina mazei (strain ATCC BAA-159 / DSM 3647 / Goe1 / Go1 / JCM 11833 / OCM 88) (Methanosarcina frisia).